The following is a 160-amino-acid chain: Peripheral myelin protein 22 (160 aa).

Position 1 (M1) is a topological domain, cytoplasmic. The chain crosses the membrane as a helical span at residues 2–31 (LLLLLGILFLHIAVLVLLFVSTIVSQWLVG). At 32-64 (NGHRTDLWQNCTTSALGAVQHCYSSSVSEWLQS) the chain is on the extracellular side. N41 is a glycosylation site (N-linked (GlcNAc...) asparagine). Residues 65–91 (VQATMILSVIFSVLSLFLFFCQLFTLT) traverse the membrane as a helical segment. The Cytoplasmic portion of the chain corresponds to 92–95 (KGGR). The helical transmembrane segment at 96 to 119 (FYITGVFQILAGLCVMSAAAIYTV) threads the bilayer. Residues 120-133 (RHSEWHVNNDYSYG) are Extracellular-facing. The helical transmembrane segment at 134–156 (FAYILAWVAFPLALLSGIIYVIL) threads the bilayer. Topologically, residues 157-160 (RKRE) are cytoplasmic.

It belongs to the PMP-22/EMP/MP20 family. In terms of processing, ubiquitinated by the DCX(DCAF13) E3 ubiquitin ligase complex, leading to its degradation. As to expression, found exclusively in the peripheral nervous system. Present in both myelinating and nonmyelinating Schwann cells. Found in the tumors of Schwann cell lineage where axons are present (neurofibromas) but not where axons are absent (schwannomas).

The protein localises to the cell membrane. Its function is as follows. Might be involved in growth regulation, and in myelinization in the peripheral nervous system. The chain is Peripheral myelin protein 22 (Pmp22) from Rattus norvegicus (Rat).